A 350-amino-acid polypeptide reads, in one-letter code: MEVRHNWTHAQVRELMEMPFMDLLFEAQQVHRQYHPKNYVQVSTLLSIKTGACPEDCKYCPQSARYQTDVEKERLMEVERVLDAAQKAKNAGSTRFCMGAAWKNPKERDMPLLTDMIKGVKDMGLETCMTLGMLTPEQAKQLASAGLDYYNHNLDTSPEYYGNIITTRTYQDRLDTLSHVRDAGMKICSGGIIGMGESANDRAGLLVELANLPTHPESVPINMLVKVKGTPLETAEEVDPFDFIRLIAVARIMMPTSAVRLSAGRENMNEQMQTLCFMAGANSIFYGCKLLTTPNPSEDKDMQLFNKLGINSQQVSQKPDEITENELLDRVVESVAARPTKDDLFYDASL.

Residues 38–256 (NYVQVSTLLS…IAVARIMMPT (219 aa)) enclose the Radical SAM core domain. The [4Fe-4S] cluster site is built by Cys-53, Cys-57, and Cys-60. Cys-97, Cys-128, Cys-188, and Arg-260 together coordinate [2Fe-2S] cluster.

The protein belongs to the radical SAM superfamily. Biotin synthase family. Homodimer. The cofactor is [4Fe-4S] cluster. Requires [2Fe-2S] cluster as cofactor.

It catalyses the reaction (4R,5S)-dethiobiotin + (sulfur carrier)-SH + 2 reduced [2Fe-2S]-[ferredoxin] + 2 S-adenosyl-L-methionine = (sulfur carrier)-H + biotin + 2 5'-deoxyadenosine + 2 L-methionine + 2 oxidized [2Fe-2S]-[ferredoxin]. It participates in cofactor biosynthesis; biotin biosynthesis; biotin from 7,8-diaminononanoate: step 2/2. Catalyzes the conversion of dethiobiotin (DTB) to biotin by the insertion of a sulfur atom into dethiobiotin via a radical-based mechanism. This Vibrio vulnificus (strain CMCP6) protein is Biotin synthase.